A 393-amino-acid polypeptide reads, in one-letter code: Calreticulin (393 aa).

An N-terminal signal peptide occupies residues 1-16 (MLSILLTLLLSKYALG). Asparagine 27 carries an N-linked (GlcNAc...) asparagine glycan. A disulfide bond links cysteine 103 and cysteine 135. Residues tyrosine 107, lysine 109, tyrosine 126, and aspartate 133 each contribute to the an alpha-D-glucoside site. A run of 7 repeats spans residues 189-200 (VEEGSLEDDWDM), 208-219 (DPNDKKPDDWVD), 225-236 (DPDDKKPDNWDQ), 242-253 (DMDAKKPDDWDD), 257-267 (GEWERPQKDNP), 271-281 (GEWTPRRIDNP), and 285-295 (GEWKPVQIDNP). The interval 189–253 (VEEGSLEDDW…DAKKPDDWDD (65 aa)) is 4 X 12 AA approximate repeats. A disordered region spans residues 194–277 (LEDDWDMLPP…EYKGEWTPRR (84 aa)). Residues 202–216 (PPKKIDDPNDKKPDD) are compositionally biased toward basic and acidic residues. The segment covering 217 to 226 (WVDEQFIDDP) has biased composition (acidic residues). 2 stretches are compositionally biased toward basic and acidic residues: residues 227–249 (DDKK…KKPD) and 258–277 (EWER…TPRR). A 3 X 11 AA approximate repeats region spans residues 257-295 (GEWERPQKDNPEYKGEWTPRRIDNPKYKGEWKPVQIDNP). An an alpha-D-glucoside-binding site is contributed by aspartate 315. The tract at residues 351 to 393 (AEVAKEQSSAKDDKEEAEETKERKELPYDAKASDEPSGDHDEL) is disordered. Residues 390–393 (HDEL) carry the Prevents secretion from ER motif.

The protein belongs to the calreticulin family.

It is found in the endoplasmic reticulum lumen. Functionally, molecular calcium-binding chaperone promoting folding, oligomeric assembly and quality control in the ER via the calreticulin/calnexin cycle. This lectin may interact transiently with almost all of the monoglucosylated glycoproteins that are synthesized in the ER. This is Calreticulin from Schistosoma mansoni (Blood fluke).